Here is a 155-residue protein sequence, read N- to C-terminus: Small ribosomal subunit protein uS7cz/uS7cy (155 aa).

This sequence belongs to the universal ribosomal protein uS7 family. Part of the 30S ribosomal subunit.

The protein localises to the plastid. Its subcellular location is the chloroplast. Its function is as follows. One of the primary rRNA binding proteins, it binds directly to 16S rRNA where it nucleates assembly of the head domain of the 30S subunit. The polypeptide is Small ribosomal subunit protein uS7cz/uS7cy (rps7-A) (Lactuca sativa (Garden lettuce)).